Here is a 160-residue protein sequence, read N- to C-terminus: Probable transcriptional regulator YgiV (160 aa).

Its function is as follows. Represses expression of mcbR. The sequence is that of Probable transcriptional regulator YgiV (ygiV) from Escherichia coli O157:H7.